A 346-amino-acid chain; its full sequence is MCASATRPQPSASNNVKKIILPDLVSHCTFKLRHNRHRKQVTTETKKWLFKDGNLLGQKERAYHGLKCGLLTSMCYPDAGYPQLRVVNDFLTYLFHLDNLSDEMDNRGTTTTADEVLNSLYHPHTWRSSARVGKMTRDFYKRLVLTASPGAQQRFIETFDFFFQSVTQQALDRASGVIPDLESYISLRRDTSGCKPCWAMIEYANNLDIPDEVMDHPIIRSLGEATNDLVTWSNDIFSYSVEQSKGHTHNMIPVVMYQEGLDLQAAVDFVGDMCRQSINRFVEEKARLPSWGPKIDQDVAIYVQGLADWIVGSLHWSFETERYFGKSGRQVKASRIVDLLPRQRLP.

4 residues coordinate Mg(2+): D98, N234, S238, and E242. Positions 98-102 match the DDXXD motif motif; that stretch reads DNLSD. (2E,6E)-farnesyl diphosphate is bound by residues R322 and Y323.

Belongs to the terpene synthase family. Mg(2+) serves as cofactor.

The catalysed reaction is (2E,6E)-farnesyl diphosphate = delta-cadinene + diphosphate. It catalyses the reaction (2E,6E)-farnesyl diphosphate = alpha-muurolene + diphosphate. The enzyme catalyses (2E,6E)-farnesyl diphosphate = gamma-muurolene + diphosphate. It carries out the reaction (2E,6E)-farnesyl diphosphate = alpha-selinene + diphosphate. Functionally, terpene cyclase that catalyzes the cyclization of farnesyl diphosphate (FPP) to various sesquiterpenes, including alpha-muurolene, gamma-muurolene, alpha-selinene, beta-selinene, delta-cadinene, alpha-cadinol and delta-cadinol. Delta-cadinene is the major product of Agr1. The protein is Sesquiterpene synthase Agr1 of Cyclocybe aegerita (Black poplar mushroom).